The primary structure comprises 1148 residues: Pyruvate carboxylase (1148 aa).

Residues 1–457 (MSQQSIQKVL…DTSFIDTTPE (457 aa)) enclose the Biotin carboxylation domain. ATP contacts are provided by K121, E205, and H240. The region spanning 125–321 (REQAEKAGIP…IVQTQILVAQ (197 aa)) is the ATP-grasp domain. The active site involves K242. The Pyruvate carboxyltransferase domain occupies 534–802 (VLLTDTTFRD…RPEMNVQGVE (269 aa)). Residues 542–546 (RDAHQ) and R615 contribute to the substrate site. Position 543 (D543) interacts with a divalent metal cation. Residues K712, H741, and H743 each coordinate a divalent metal cation. At K712 the chain carries N6-carboxylysine. Position 876 (T876) interacts with substrate. The Biotinyl-binding domain occupies 1071-1146 (KADRTNPSHI…QTGDLLLEIE (76 aa)). K1112 carries the N6-biotinyllysine modification.

As to quaternary structure, homotetramer. At very low potassium concentrations, when intracellular levels of c-di-AMP are low, interacts with apo-DarB. c-di-AMP inhibits the binding of DarB to PYC. Does not bind directly c-di-AMP. It depends on biotin as a cofactor.

The catalysed reaction is hydrogencarbonate + pyruvate + ATP = oxaloacetate + ADP + phosphate + H(+). Its activity is regulated as follows. Activated by the cyclic di-AMP (c-di-AMP) receptor DarB in the absence of c-di-AMP. Allosterically activated by acetyl-CoA. Inhibited by the biotin-complexing protein avidin. Its function is as follows. Catalyzes a 2-step reaction, involving the ATP-dependent carboxylation of the covalently attached biotin in the first step and the transfer of the carboxyl group to pyruvate in the second, leading to oxaloacetate production. Fulfills an anaplerotic function in B.subtilis as it is necessary for growth on glucose, but is not required for sporulation. This is Pyruvate carboxylase (pyc) from Bacillus subtilis (strain 168).